A 931-amino-acid polypeptide reads, in one-letter code: Protein translocase subunit SecA (931 aa).

ATP contacts are provided by residues Gln87, Gly105 to Thr109, and Asp515. Residues Cys915, Cys917, Cys926, and His927 each coordinate Zn(2+).

Belongs to the SecA family. In terms of assembly, monomer and homodimer. Part of the essential Sec protein translocation apparatus which comprises SecA, SecYEG and auxiliary proteins SecDF-YajC and YidC. The cofactor is Zn(2+).

The protein localises to the cell inner membrane. It localises to the cytoplasm. The enzyme catalyses ATP + H2O + cellular proteinSide 1 = ADP + phosphate + cellular proteinSide 2.. Its function is as follows. Part of the Sec protein translocase complex. Interacts with the SecYEG preprotein conducting channel. Has a central role in coupling the hydrolysis of ATP to the transfer of proteins into and across the cell membrane, serving both as a receptor for the preprotein-SecB complex and as an ATP-driven molecular motor driving the stepwise translocation of polypeptide chains across the membrane. In Burkholderia pseudomallei (strain K96243), this protein is Protein translocase subunit SecA.